Consider the following 234-residue polypeptide: Zinc finger FYVE domain-containing protein 21 (234 aa).

The FYVE-type zinc finger occupies 44–104 (DKECPRCMQC…QCADCALVSH (61 aa)). The Zn(2+) site is built by cysteine 50, cysteine 53, cysteine 66, cysteine 69, cysteine 74, cysteine 77, cysteine 96, and cysteine 99. Residues 107-234 (AEFYDKQLKV…TKLLYESRDQ (128 aa)) are PH-like.

In terms of assembly, interacts with PTK2/FAK1.

Its subcellular location is the cell junction. It localises to the focal adhesion. The protein resides in the cytoplasmic vesicle. It is found in the endosome. Functionally, plays a role in cell adhesion, and thereby in cell motility which requires repeated formation and disassembly of focal adhesions. Regulates microtubule-induced PTK2/FAK1 dephosphorylation, an event important for focal adhesion disassembly, as well as integrin beta-1/ITGB1 cell surface expression. This chain is Zinc finger FYVE domain-containing protein 21 (Zfyve21), found in Rattus norvegicus (Rat).